A 313-amino-acid polypeptide reads, in one-letter code: Ribosomal RNA small subunit methyltransferase H (313 aa).

S-adenosyl-L-methionine-binding positions include 35–37 (GGH), D55, F81, D103, and Q110.

The protein belongs to the methyltransferase superfamily. RsmH family.

The protein localises to the cytoplasm. It carries out the reaction cytidine(1402) in 16S rRNA + S-adenosyl-L-methionine = N(4)-methylcytidine(1402) in 16S rRNA + S-adenosyl-L-homocysteine + H(+). Functionally, specifically methylates the N4 position of cytidine in position 1402 (C1402) of 16S rRNA. This is Ribosomal RNA small subunit methyltransferase H from Pseudomonas paraeruginosa (strain DSM 24068 / PA7) (Pseudomonas aeruginosa (strain PA7)).